The sequence spans 172 residues: MLDAFSKVVAQADARGEFLSNTQLDALSKMVADGNKRLDATAAISANAATIVTNAARSLFSEQPQLIQPGGNAYTNRRMAACLRDMEIILRYVSYATIAGDSSVLDDRCLNGLRETYQALGVPGASVALAVEKMKEAAIAFANDSSNVTIGDCSALISEIATYFDRAAKAVV.

Residues Asn35, Asp39, Asn72, Arg77, Cys82, Cys82–Ile88, Thr149–Gly151, and Cys153 contribute to the (2R,3E)-phycocyanobilin site. Asn72 is subject to N4-methylasparagine.

Belongs to the phycobiliprotein family. In terms of assembly, heterodimer of an alpha and a beta subunit, which further assembles into trimers and the trimers into hexamers. The basic functional unit of phycobiliproteins is a ring-shaped hexamer formed from two back-to-back trimers contacting via the alpha chain subunits. The trimers are composed of alpha/beta subunit heterodimers arranged around a three-fold axis of symmetry. The phycoerythrins also contain a gamma subunit which is located in the center of the hexamer. Contains two covalently linked phycocyanobilin chromophores.

The protein resides in the plastid. The protein localises to the chloroplast thylakoid membrane. Light-harvesting photosynthetic tetrapyrrole chromophore-protein from the phycobiliprotein complex (phycobilisome, PBS). Phycocyanin is the major phycobiliprotein in the PBS rod. The chain is C-phycocyanin beta chain (cpcB) from Cyanidium caldarium (Red alga).